The sequence spans 435 residues: Methylenetetrahydrofolate--tRNA-(uracil-5-)-methyltransferase TrmFO (435 aa).

9-14 contacts FAD; the sequence is GAGLAG.

Belongs to the MnmG family. TrmFO subfamily. FAD serves as cofactor.

Its subcellular location is the cytoplasm. The catalysed reaction is uridine(54) in tRNA + (6R)-5,10-methylene-5,6,7,8-tetrahydrofolate + NADH + H(+) = 5-methyluridine(54) in tRNA + (6S)-5,6,7,8-tetrahydrofolate + NAD(+). The enzyme catalyses uridine(54) in tRNA + (6R)-5,10-methylene-5,6,7,8-tetrahydrofolate + NADPH + H(+) = 5-methyluridine(54) in tRNA + (6S)-5,6,7,8-tetrahydrofolate + NADP(+). Catalyzes the folate-dependent formation of 5-methyl-uridine at position 54 (M-5-U54) in all tRNAs. The chain is Methylenetetrahydrofolate--tRNA-(uracil-5-)-methyltransferase TrmFO from Staphylococcus aureus (strain Newman).